The primary structure comprises 357 residues: Holliday junction branch migration complex subunit RuvB (357 aa).

A compositionally biased stretch (low complexity) spans 1–15 (MAIQSDSLSSLPDSP). A disordered region spans residues 1–30 (MAIQSDSLSSLPDSPRIVAPQPVSPNEESI). Residues 13-195 (DSPRIVAPQP…FGIVSRLEFY (183 aa)) form a large ATPase domain (RuvB-L) region. ATP-binding positions include Leu34, Arg35, Gly76, Lys79, Thr80, Thr81, 142 to 144 (EDF), Arg185, Tyr195, and Arg232. Position 80 (Thr80) interacts with Mg(2+). Residues 196–266 (NTDELARIVT…AAGRALAMLD (71 aa)) form a small ATPAse domain (RuvB-S) region. Residues 269–357 (PQGLDVMDRK…SGGTGELFSK (89 aa)) form a head domain (RuvB-H) region. Positions 305, 324, and 329 each coordinate DNA.

It belongs to the RuvB family. As to quaternary structure, homohexamer. Forms an RuvA(8)-RuvB(12)-Holliday junction (HJ) complex. HJ DNA is sandwiched between 2 RuvA tetramers; dsDNA enters through RuvA and exits via RuvB. An RuvB hexamer assembles on each DNA strand where it exits the tetramer. Each RuvB hexamer is contacted by two RuvA subunits (via domain III) on 2 adjacent RuvB subunits; this complex drives branch migration. In the full resolvosome a probable DNA-RuvA(4)-RuvB(12)-RuvC(2) complex forms which resolves the HJ.

The protein resides in the cytoplasm. The enzyme catalyses ATP + H2O = ADP + phosphate + H(+). Its function is as follows. The RuvA-RuvB-RuvC complex processes Holliday junction (HJ) DNA during genetic recombination and DNA repair, while the RuvA-RuvB complex plays an important role in the rescue of blocked DNA replication forks via replication fork reversal (RFR). RuvA specifically binds to HJ cruciform DNA, conferring on it an open structure. The RuvB hexamer acts as an ATP-dependent pump, pulling dsDNA into and through the RuvAB complex. RuvB forms 2 homohexamers on either side of HJ DNA bound by 1 or 2 RuvA tetramers; 4 subunits per hexamer contact DNA at a time. Coordinated motions by a converter formed by DNA-disengaged RuvB subunits stimulates ATP hydrolysis and nucleotide exchange. Immobilization of the converter enables RuvB to convert the ATP-contained energy into a lever motion, pulling 2 nucleotides of DNA out of the RuvA tetramer per ATP hydrolyzed, thus driving DNA branch migration. The RuvB motors rotate together with the DNA substrate, which together with the progressing nucleotide cycle form the mechanistic basis for DNA recombination by continuous HJ branch migration. Branch migration allows RuvC to scan DNA until it finds its consensus sequence, where it cleaves and resolves cruciform DNA. In Bordetella bronchiseptica (strain ATCC BAA-588 / NCTC 13252 / RB50) (Alcaligenes bronchisepticus), this protein is Holliday junction branch migration complex subunit RuvB.